A 22-amino-acid chain; its full sequence is FVPIFTHSELQKIREKERNKGQ.

The tract at residues 1–22 is disordered; it reads FVPIFTHSELQKIREKERNKGQ. Positions 9-22 are enriched in basic and acidic residues; sequence ELQKIREKERNKGQ.

The protein belongs to the motilin family.

The protein localises to the secreted. In terms of biological role, plays an important role in the regulation of interdigestive gastrointestinal motility and indirectly causes rhythmic contraction of duodenal and colonic smooth muscle. This Canis lupus familiaris (Dog) protein is Motilin (MLN).